The following is a 185-amino-acid chain: Ribosome-recycling factor (185 aa).

It belongs to the RRF family.

It localises to the cytoplasm. Its function is as follows. Responsible for the release of ribosomes from messenger RNA at the termination of protein biosynthesis. May increase the efficiency of translation by recycling ribosomes from one round of translation to another. This chain is Ribosome-recycling factor, found in Pseudarthrobacter chlorophenolicus (strain ATCC 700700 / DSM 12829 / CIP 107037 / JCM 12360 / KCTC 9906 / NCIMB 13794 / A6) (Arthrobacter chlorophenolicus).